Reading from the N-terminus, the 157-residue chain is uncharacterized protein (157 aa).

One can recognise an N-acetyltransferase domain in the interval 9-154 (LLINYKTLDE…ETNLNAVTNE (146 aa)).

This is an uncharacterized protein from Bacillus cereus (strain ATCC 14579 / DSM 31 / CCUG 7414 / JCM 2152 / NBRC 15305 / NCIMB 9373 / NCTC 2599 / NRRL B-3711).